Consider the following 204-residue polypeptide: Transcriptional regulator GfcR (204 aa).

The protein belongs to the purine/pyrimidine phosphoribosyltransferase family. GfcR subfamily.

The chain is Transcriptional regulator GfcR from Methanosarcina mazei (strain ATCC BAA-159 / DSM 3647 / Goe1 / Go1 / JCM 11833 / OCM 88) (Methanosarcina frisia).